The chain runs to 570 residues: Repressible high-affinity phosphate permease (570 aa).

The Cytoplasmic portion of the chain corresponds to 1 to 61 (MSTPQKTAGG…AVAGVGFFTD (61 aa)). The helical transmembrane segment at 62 to 82 (SYDIFTVSLLTLMLGIVYFPG) threads the bilayer. The Extracellular portion of the chain corresponds to 83–95 (EGKMPTTSDTAIK). The chain crosses the membrane as a helical span at residues 96 to 116 (LATSAGTVIGQVGFGAAADVF). Residues 117–120 (GRKS) lie on the Cytoplasmic side of the membrane. A helical transmembrane segment spans residues 121–141 (MYGLELLFIIFATLAQALASG). Topologically, residues 142-143 (SP) are extracellular. The helical transmembrane segment at 144–164 (SINIIGIIIFWRVLMGVGIGG) threads the bilayer. The Cytoplasmic segment spans residues 165–186 (DYPLSSIITSEFATTKWRGAMM). The chain crosses the membrane as a helical span at residues 187 to 207 (GAVFAMQGLGQLAAAFVMLFV). At 208 to 237 (TLGFKKSLEAAPTLASCTGDCAVAVDKMWR) the chain is on the extracellular side. The helical transmembrane segment at 238–258 (TVIGVGAVPGCIALYYRLTIP) threads the bilayer. Topologically, residues 259–325 (ETPRYTFDVK…FFRHYSKRKN (67 aa)) are cytoplasmic. Residues 326–346 (AMLLAGTALSWCFLDIAYYGV) form a helical membrane-spanning segment. The Extracellular segment spans residues 347–374 (SLNNATILNVIGYSTTGAKNTYEILYNT). Residues 375–395 (AVGNLIIVLAGAVPGYWVTVF) form a helical membrane-spanning segment. At 396–403 (TVDTVGRK) the chain is on the cytoplasmic side. The chain crosses the membrane as a helical span at residues 404 to 424 (PIQFMGFGILTILFVVMGFAY). Topologically, residues 425–433 (KHLSPHALL) are extracellular. Residues 434–454 (AIFVLAQFFFNFGPNATTFIV) traverse the membrane as a helical segment. The Cytoplasmic segment spans residues 455–468 (PGEVFPTRYRSTSH). The helical transmembrane segment at 469–489 (GLSAAMGKIGSIIGQGAIAPL) threads the bilayer. Residues 490–505 (RTRGAVKGGNPNPWMN) lie on the Extracellular side of the membrane. Residues 506-526 (HVLEIYALFMLLGVGTTFLIP) traverse the membrane as a helical segment. Topologically, residues 527–570 (ETKRKTLEELSGEFDMSGEEEAQRDTTLTEHKTEAPTSSAAVNA) are cytoplasmic. The span at 537 to 546 (SGEFDMSGEE) shows a compositional bias: acidic residues. Positions 537-570 (SGEFDMSGEEEAQRDTTLTEHKTEAPTSSAAVNA) are disordered. Residues 547-560 (EAQRDTTLTEHKTE) show a composition bias toward basic and acidic residues. Residues 561-570 (APTSSAAVNA) are compositionally biased toward polar residues.

Belongs to the major facilitator superfamily. Sugar transporter (TC 2.A.1.1) family.

It localises to the cell membrane. With respect to regulation, phosphate transport activity is competitively inhibited by arsenate. In terms of biological role, high-affinity transporter for external inorganic phosphate. Acts probably as a H(+)-phosphate symporter. The sequence is that of Repressible high-affinity phosphate permease from Neurospora crassa (strain ATCC 24698 / 74-OR23-1A / CBS 708.71 / DSM 1257 / FGSC 987).